A 327-amino-acid chain; its full sequence is Endochitinase CH5B (327 aa).

Residues 1 to 26 form the signal peptide; that stretch reads MKKNRMMIMICSVGVVWMLLVGGSYG. The Chitin-binding type-1 domain maps to 27-67; sequence EQCGRQAGGALCPGGNCCSQFGWCGSTTDYCGKDCQSQCGG. Intrachain disulfides connect Cys-29–Cys-44, Cys-38–Cys-50, Cys-43–Cys-57, Cys-61–Cys-65, Cys-96–Cys-158, Cys-169–Cys-177, and Cys-276–Cys-308. Glu-140 (proton donor) is an active-site residue. Positions 317–327 are cleaved as a propeptide — removed in mature form; that stretch reads SLFLSDLVTSQ.

Belongs to the glycosyl hydrolase 19 family. Chitinase class I subfamily.

It localises to the vacuole. It catalyses the reaction Random endo-hydrolysis of N-acetyl-beta-D-glucosaminide (1-&gt;4)-beta-linkages in chitin and chitodextrins.. Functionally, defense against chitin-containing fungal pathogens. In Phaseolus vulgaris (Kidney bean), this protein is Endochitinase CH5B.